A 332-amino-acid polypeptide reads, in one-letter code: 2,3-diketo-L-gulonate reductase (332 aa).

His44 serves as the catalytic Proton donor. NAD(+)-binding positions include 168 to 174 (ITMVDMS), 224 to 225 (WK), and 304 to 306 (GHE).

It belongs to the LDH2/MDH2 oxidoreductase family. DlgD subfamily. As to quaternary structure, homodimer.

The protein localises to the cytoplasm. The catalysed reaction is 3-dehydro-L-gulonate + NAD(+) = 2,3-dioxo-L-gulonate + NADH + H(+). It catalyses the reaction 3-dehydro-L-gulonate + NADP(+) = 2,3-dioxo-L-gulonate + NADPH + H(+). Functionally, catalyzes the reduction of 2,3-diketo-L-gulonate in the presence of NADH, to form 3-keto-L-gulonate. The sequence is that of 2,3-diketo-L-gulonate reductase from Salmonella typhimurium (strain LT2 / SGSC1412 / ATCC 700720).